We begin with the raw amino-acid sequence, 237 residues long: Cytidylate kinase (237 aa).

Residue 15–23 (GPSGSGKGT) coordinates ATP.

This sequence belongs to the cytidylate kinase family. Type 1 subfamily.

It is found in the cytoplasm. It catalyses the reaction CMP + ATP = CDP + ADP. It carries out the reaction dCMP + ATP = dCDP + ADP. The sequence is that of Cytidylate kinase from Coxiella burnetii (strain RSA 493 / Nine Mile phase I).